Reading from the N-terminus, the 142-residue chain is Hemoglobin subunit alpha-2 (142 aa).

Residues 2-142 form the Globin domain; that stretch reads VLSAADKTNV…VSTVLTSKYR (141 aa). Histidine 59 contributes to the O2 binding site. Histidine 88 serves as a coordination point for heme b.

It belongs to the globin family. In terms of assembly, heterotetramer of two alpha chains and two beta chains. As to expression, red blood cells.

In terms of biological role, involved in oxygen transport from the lung to the various peripheral tissues. Functionally, hemopressin acts as an antagonist peptide of the cannabinoid receptor CNR1. Hemopressin-binding efficiently blocks cannabinoid receptor CNR1 and subsequent signaling. This Equus quagga burchellii (Burchell's zebra) protein is Hemoglobin subunit alpha-2 (HBA2).